We begin with the raw amino-acid sequence, 214 residues long: Large ribosomal subunit protein uL3 (214 aa).

The tract at residues 134 to 153 (ATHGNSLSHRAPGSIGQNQT) is disordered. The residue at position 152 (Gln152) is an N5-methylglutamine.

The protein belongs to the universal ribosomal protein uL3 family. In terms of assembly, part of the 50S ribosomal subunit. Forms a cluster with proteins L14 and L19. Methylated by PrmB.

Functionally, one of the primary rRNA binding proteins, it binds directly near the 3'-end of the 23S rRNA, where it nucleates assembly of the 50S subunit. This Buchnera aphidicola subsp. Baizongia pistaciae (strain Bp) protein is Large ribosomal subunit protein uL3.